The following is a 225-amino-acid chain: Cytidylate kinase (225 aa).

ATP is bound at residue 10–18 (GPASSGKST).

Belongs to the cytidylate kinase family. Type 1 subfamily.

The protein resides in the cytoplasm. It catalyses the reaction CMP + ATP = CDP + ADP. The enzyme catalyses dCMP + ATP = dCDP + ADP. This chain is Cytidylate kinase, found in Streptococcus suis (strain 98HAH33).